Reading from the N-terminus, the 113-residue chain is MVDSDIQIPTSFDPFAEAEITDATGSTKEYVHIRIQQRNGRKSLTTVQGLKKELSYDKILKDLKKALCCNGTVVNDKELGKVIQLQGDQRKNVSTFIVQAGIVKKDQIKVHNF.

It belongs to the SUI1 family.

In terms of biological role, probably involved in translation. This is Protein translation factor SUI1 homolog from Spuriopimpinella brachycarpa (Chamnamul).